A 251-amino-acid polypeptide reads, in one-letter code: UDP-N-acetylglucosamine--dolichyl-phosphate N-acetylglucosaminyltransferase (251 aa).

The helical transmembrane segment at 150 to 167 (VGNLGLSFITFLLGGYYV) threads the bilayer.

This sequence belongs to the glycosyltransferase 2 family.

The protein localises to the cell membrane. The catalysed reaction is a di-trans,poly-cis-dolichyl phosphate + UDP-N-acetyl-alpha-D-glucosamine = an N-acetyl-alpha-D-glucosaminyl-phospho-di-trans,poly-cis-dolichol + UDP. The protein operates within cell surface structure biogenesis; S-layer biogenesis. It participates in protein modification; protein glycosylation. Its function is as follows. Involved in the assembly of an N-linked disaccharide that decorates the S-layer glycoprotein and flagellins. AglK initiates N-linked glycosylation through the formation of alpha-linked dolichyl monophosphate N-acetylglucosamine. It catalyzes the transfer of GlcNAc from the donor substrate UDP-GlcNAc to dolichyl phosphate C55 (Dol-P) to yield Dol-P-GlcNAc. AglK reaction proceeds with retention of stereochemistry. The reaction is specific for UDP-GlcNAc. AglK shows a stronger preference for short dolichol (C55-60 Dol-P) substrates compared with the longer (C85-105 Dol-P). This is UDP-N-acetylglucosamine--dolichyl-phosphate N-acetylglucosaminyltransferase from Methanococcus voltae.